We begin with the raw amino-acid sequence, 146 residues long: Cyanate hydratase (146 aa).

Residues Arg-87, Glu-90, and Ser-113 contribute to the active site.

It belongs to the cyanase family.

The enzyme catalyses cyanate + hydrogencarbonate + 3 H(+) = NH4(+) + 2 CO2. In terms of biological role, catalyzes the reaction of cyanate with bicarbonate to produce ammonia and carbon dioxide. This Trichormus variabilis (strain ATCC 29413 / PCC 7937) (Anabaena variabilis) protein is Cyanate hydratase.